The sequence spans 369 residues: MIGAGSWGTTFAKILADGGNDVVVWARRPELAREIDEGKRNSDYLQGINLPRSLRATSHLGEAMRGAEQVFVSLPSQTLRSNLDAMIPYLGPATVVISLMKGVEKGTGLRMSEVIAQGLPIDPEQIAVVSGPNLALEIAREQPTAAVVSSVSPATAVAVATSATNRYFRSFVNTDVIGTEFGGVLKNLIAVAIGIVDGVGYGENTKASIITRGLVEMTDFAVAYGADPQTLSGLAGLGDLIATCESPLSRNNTAGRLLGQGYSFTDVVKQMDQAAEGLASVTPILSLAEARGVEMPIVRQVSQVLAGTLAPKDIAPHLTTDDEPQGERTRGERTTDDGQGQGRTSVWGSLKRAFDQLRDGGGSSRRDRP.

The NADPH site is built by serine 6, tryptophan 7, arginine 27, arginine 28, and lysine 101. The sn-glycerol 3-phosphate site is built by lysine 101 and glycine 131. An NADPH-binding site is contributed by alanine 135. Sn-glycerol 3-phosphate contacts are provided by lysine 186, aspartate 239, serine 249, arginine 250, and asparagine 251. The active-site Proton acceptor is the lysine 186. Arginine 250 contacts NADPH. Glutamate 276 serves as a coordination point for NADPH. The interval 312 to 369 (KDIAPHLTTDDEPQGERTRGERTTDDGQGQGRTSVWGSLKRAFDQLRDGGGSSRRDRP) is disordered. Composition is skewed to basic and acidic residues over residues 325 to 336 (QGERTRGERTTD) and 352 to 369 (RAFD…RDRP).

Belongs to the NAD-dependent glycerol-3-phosphate dehydrogenase family.

It is found in the cytoplasm. It carries out the reaction sn-glycerol 3-phosphate + NAD(+) = dihydroxyacetone phosphate + NADH + H(+). The enzyme catalyses sn-glycerol 3-phosphate + NADP(+) = dihydroxyacetone phosphate + NADPH + H(+). Its pathway is membrane lipid metabolism; glycerophospholipid metabolism. Its function is as follows. Catalyzes the reduction of the glycolytic intermediate dihydroxyacetone phosphate (DHAP) to sn-glycerol 3-phosphate (G3P), the key precursor for phospholipid synthesis. This Leifsonia xyli subsp. xyli (strain CTCB07) protein is Glycerol-3-phosphate dehydrogenase [NAD(P)+].